The sequence spans 206 residues: Small ribosomal subunit protein uS4 (206 aa).

An S4 RNA-binding domain is found at 96-156; sequence SRLDNVVYRM…EKSKNQLRIQ (61 aa).

The protein belongs to the universal ribosomal protein uS4 family. As to quaternary structure, part of the 30S ribosomal subunit. Contacts protein S5. The interaction surface between S4 and S5 is involved in control of translational fidelity.

One of the primary rRNA binding proteins, it binds directly to 16S rRNA where it nucleates assembly of the body of the 30S subunit. In terms of biological role, with S5 and S12 plays an important role in translational accuracy. The chain is Small ribosomal subunit protein uS4 from Teredinibacter turnerae (strain ATCC 39867 / T7901).